Here is a 216-residue protein sequence, read N- to C-terminus: tRNA (guanine-N(7)-)-methyltransferase (216 aa).

Positions 44, 69, 96, and 118 each coordinate S-adenosyl-L-methionine. Residue D118 is part of the active site. A substrate-binding site is contributed by K122. Residues 124-129 (RHEKRR) form an interaction with RNA region. Substrate is bound by residues D154 and 191 to 194 (TEYE).

This sequence belongs to the class I-like SAM-binding methyltransferase superfamily. TrmB family.

The catalysed reaction is guanosine(46) in tRNA + S-adenosyl-L-methionine = N(7)-methylguanosine(46) in tRNA + S-adenosyl-L-homocysteine. Its pathway is tRNA modification; N(7)-methylguanine-tRNA biosynthesis. In terms of biological role, catalyzes the formation of N(7)-methylguanine at position 46 (m7G46) in tRNA. In Geobacillus thermodenitrificans (strain NG80-2), this protein is tRNA (guanine-N(7)-)-methyltransferase.